The following is a 377-amino-acid chain: Chaperone protein DnaJ (377 aa).

In terms of domain architecture, J spans 5 to 69 (EYYDRLGLSK…QKRAAYDQYG (65 aa)). Residues 133–215 (GAEKEIHYNR…CHGTGREKQS (83 aa)) form a CR-type zinc finger. Positions 146, 149, 163, 166, 189, 192, 203, and 206 each coordinate Zn(2+). 4 CXXCXGXG motif repeats span residues 146–153 (CKTCSGSG), 163–170 (CGRCHGHG), 189–196 (CDVCHGTG), and 203–210 (CQTCHGTG).

It belongs to the DnaJ family. Homodimer. Zn(2+) is required as a cofactor.

It is found in the cytoplasm. Its function is as follows. Participates actively in the response to hyperosmotic and heat shock by preventing the aggregation of stress-denatured proteins and by disaggregating proteins, also in an autonomous, DnaK-independent fashion. Unfolded proteins bind initially to DnaJ; upon interaction with the DnaJ-bound protein, DnaK hydrolyzes its bound ATP, resulting in the formation of a stable complex. GrpE releases ADP from DnaK; ATP binding to DnaK triggers the release of the substrate protein, thus completing the reaction cycle. Several rounds of ATP-dependent interactions between DnaJ, DnaK and GrpE are required for fully efficient folding. Also involved, together with DnaK and GrpE, in the DNA replication of plasmids through activation of initiation proteins. The polypeptide is Chaperone protein DnaJ (Streptococcus thermophilus (strain CNRZ 1066)).